The primary structure comprises 142 residues: Hemoglobin subunit alpha-A (142 aa).

The Globin domain occupies 2–142; sequence VLSANDKTNV…VGNVLTAKYR (141 aa). Residue histidine 59 coordinates O2. Histidine 88 serves as a coordination point for heme b.

It belongs to the globin family. Heterotetramer of two alpha chains and two beta chains. As to expression, red blood cells.

In terms of biological role, involved in oxygen transport from the lung to the various peripheral tissues. The chain is Hemoglobin subunit alpha-A (HBAA) from Aquila chrysaetos (Golden eagle).